Consider the following 251-residue polypeptide: Tritrans,polycis-undecaprenyl-diphosphate synthase (geranylgeranyl-diphosphate specific) (251 aa).

The active site involves D29. Position 29 (D29) interacts with Mg(2+). Residues 30–33, F34, H46, and 74–76 contribute to the substrate site; these read GNRR and STE. The active-site Proton acceptor is the N77. Substrate-binding positions include F78, R80, R200, and 206 to 208; that span reads RLS.

The protein belongs to the UPP synthase family. Homodimer. Mg(2+) serves as cofactor.

It carries out the reaction geranylgeranyl diphosphate + 7 isopentenyl diphosphate = tri-trans,hepta-cis-undecaprenyl diphosphate + 7 diphosphate. Functionally, catalyzes the sequential condensation of isopentenyl diphosphate (IPP) with geranylgeranyl diphosphate (GGPP) to yield (2Z,6Z,10Z,14Z,18Z,22Z,26Z,30E,34E,38E)-undecaprenyl diphosphate (tritrans,heptacis-UPP). It is probably the precursor of glycosyl carrier lipids. The protein is Tritrans,polycis-undecaprenyl-diphosphate synthase (geranylgeranyl-diphosphate specific) of Archaeoglobus fulgidus (strain ATCC 49558 / DSM 4304 / JCM 9628 / NBRC 100126 / VC-16).